A 342-amino-acid polypeptide reads, in one-letter code: MLEEQNSDIERKQDHIEINLKQNVNSTLKSGLASIKFIHNALPEINYDNIDTTTTFLGKYMKAPILISSMTGGTTRAKDINYRLAQAAQKSGIAMGLGSMRILLTKPDTIKTFTVRHVAPDIPLLANIGAVQLNYGVTPKECQYLIDTIKADALILHLNVLHELTQPEGNRNWENLLPKIKEVINYLSVPVIIKEVGYGLSKQVAKKLIKVGVKVLDIAGSGGTSWSQVEAYRAKNSMQNRIASSFINWGITTLDSLKMLREVSKDITLIASGGLQSGIDGAKAIRMGANIFGLAGQLLKAADIAESLVSEEIQLIIEQLKITMLCTGSCTLKDLAKAEIML.

11–12 (RK) contributes to the substrate binding site. FMN contacts are provided by residues serine 68, 69–71 (SMT), serine 99, and asparagine 127. Residue 99 to 101 (SMR) participates in substrate binding. Position 163 (glutamate 163) interacts with Mg(2+). Residues lysine 194, threonine 224, and 295–296 (AG) contribute to the FMN site.

This sequence belongs to the IPP isomerase type 2 family. In terms of assembly, homooctamer. Dimer of tetramers. Requires FMN as cofactor. The cofactor is NADPH. Mg(2+) serves as cofactor.

The protein localises to the cytoplasm. The enzyme catalyses isopentenyl diphosphate = dimethylallyl diphosphate. Its function is as follows. Involved in the biosynthesis of isoprenoids. Catalyzes the 1,3-allylic rearrangement of the homoallylic substrate isopentenyl (IPP) to its allylic isomer, dimethylallyl diphosphate (DMAPP). This chain is Isopentenyl-diphosphate delta-isomerase, found in Rickettsia typhi (strain ATCC VR-144 / Wilmington).